Reading from the N-terminus, the 475-residue chain is Glutamyl-tRNA(Gln) amidotransferase subunit A (475 aa).

Catalysis depends on charge relay system residues K69 and S144. The active-site Acyl-ester intermediate is the S168.

This sequence belongs to the amidase family. GatA subfamily. As to quaternary structure, heterotrimer of A, B and C subunits.

It catalyses the reaction L-glutamyl-tRNA(Gln) + L-glutamine + ATP + H2O = L-glutaminyl-tRNA(Gln) + L-glutamate + ADP + phosphate + H(+). Its function is as follows. Allows the formation of correctly charged Gln-tRNA(Gln) through the transamidation of misacylated Glu-tRNA(Gln) in organisms which lack glutaminyl-tRNA synthetase. The reaction takes place in the presence of glutamine and ATP through an activated gamma-phospho-Glu-tRNA(Gln). The chain is Glutamyl-tRNA(Gln) amidotransferase subunit A from Methanosarcina barkeri (strain Fusaro / DSM 804).